Consider the following 247-residue polypeptide: Glucosamine-6-phosphate deaminase (247 aa).

Aspartate 67 acts as the Proton acceptor; for enolization step in catalysis. Asparagine 136 acts as the For ring-opening step in catalysis. The active-site Proton acceptor; for ring-opening step is the histidine 138. Glutamate 143 serves as the catalytic For ring-opening step.

It belongs to the glucosamine/galactosamine-6-phosphate isomerase family. NagB subfamily.

It carries out the reaction alpha-D-glucosamine 6-phosphate + H2O = beta-D-fructose 6-phosphate + NH4(+). Its pathway is amino-sugar metabolism; N-acetylneuraminate degradation; D-fructose 6-phosphate from N-acetylneuraminate: step 5/5. Functionally, catalyzes the reversible isomerization-deamination of glucosamine 6-phosphate (GlcN6P) to form fructose 6-phosphate (Fru6P) and ammonium ion. The polypeptide is Glucosamine-6-phosphate deaminase (Shouchella clausii (strain KSM-K16) (Alkalihalobacillus clausii)).